The following is a 329-amino-acid chain: ATPase ASNA1 homolog 1 (329 aa).

Residue 26–33 participates in ATP binding; that stretch reads KGGVGKTT. The active site involves D55. Residues E235 and N262 each coordinate ATP. C271 and C274 together coordinate Zn(2+).

This sequence belongs to the arsA ATPase family. As to quaternary structure, homodimer.

Its subcellular location is the cytoplasm. The protein resides in the endoplasmic reticulum. ATPase required for the post-translational delivery of tail-anchored (TA) proteins to the endoplasmic reticulum. Recognizes and selectively binds the transmembrane domain of TA proteins in the cytosol. This complex then targets to the endoplasmic reticulum by membrane-bound receptors, where the tail-anchored protein is released for insertion. This process is regulated by ATP binding and hydrolysis. ATP binding drives the homodimer towards the closed dimer state, facilitating recognition of newly synthesized TA membrane proteins. ATP hydrolysis is required for insertion. Subsequently, the homodimer reverts towards the open dimer state, lowering its affinity for the membrane-bound receptor, and returning it to the cytosol to initiate a new round of targeting. This chain is ATPase ASNA1 homolog 1, found in Paramecium tetraurelia.